A 167-amino-acid polypeptide reads, in one-letter code: MAQEEEDVRDYNLTEEQKAIKAKYPPVNRKYEYLDHTADVQLHAWGDTLEEAFEQCAMAMFGYMTDTGTVEPLQTVEVETQGDDLQSLLFHFLDEWLYKFSADEFFIPREVKVLSIDQRNFKLRSIGWGEEFSLSKHPQGTEVKAITYSAMQVYNEENPEVFVIIDI.

The residue at position 2 (A2) is an N-acetylalanine. Residues D39, D166, and I167 each contribute to the Ca(2+) site.

Belongs to the archease family. Component of the tRNA-splicing ligase complex.

Component of the tRNA-splicing ligase complex required to facilitate the enzymatic turnover of catalytic subunit RTCB. Together with DDX1, acts by facilitating the guanylylation of RTCB, a key intermediate step in tRNA ligation. This chain is Protein archease (ZBTB8OS), found in Homo sapiens (Human).